Consider the following 450-residue polypeptide: tRNA modification GTPase MnmE (450 aa).

(6S)-5-formyl-5,6,7,8-tetrahydrofolate is bound by residues Arg25, Glu86, and Arg126. Positions 221 to 373 (GLRVALVGRP…LVQALLERCG (153 aa)) constitute a TrmE-type G domain. Residue Asn231 participates in K(+) binding. Residues 231–236 (NVGKSS), 250–256 (TDLPGTT), 275–278 (DTAG), and 336–339 (NKAD) contribute to the GTP site. Ser235 lines the Mg(2+) pocket. K(+) is bound by residues Thr250, Leu252, and Thr255. Position 256 (Thr256) interacts with Mg(2+). Lys450 is a (6S)-5-formyl-5,6,7,8-tetrahydrofolate binding site.

The protein belongs to the TRAFAC class TrmE-Era-EngA-EngB-Septin-like GTPase superfamily. TrmE GTPase family. Homodimer. Heterotetramer of two MnmE and two MnmG subunits. Requires K(+) as cofactor.

The protein resides in the cytoplasm. Exhibits a very high intrinsic GTPase hydrolysis rate. Involved in the addition of a carboxymethylaminomethyl (cmnm) group at the wobble position (U34) of certain tRNAs, forming tRNA-cmnm(5)s(2)U34. The chain is tRNA modification GTPase MnmE from Synechococcus sp. (strain CC9605).